The sequence spans 69 residues: Conopeptide Y-Fe1 (69 aa).

An N-terminal signal peptide occupies residues 1–20 (MSKLGVVLFVFLLLLPLAAP). The propeptide occupies 21–69 (QPVGDQPADQPADRNAEARGTYLYPFSYYRLWRYFTRFLHKQPYYYVHI).

It belongs to the conotoxin M superfamily. Conopeptide Y family. As to expression, expressed by the venom duct.

It localises to the secreted. Tyrosine-rich conopeptide that specifically targets voltage-gated potassium channel Kv1.6/KCNA6 (IC(50) is 8.8 uM) that is expressed in Xenopus oocytes. In vivo, causes seizures (at 5 nmol) and death (20 nmol) when intracranially injected into mice, and causes paralysis (at 10 pmol) to C.elegans. This chain is Conopeptide Y-Fe1, found in Conus ferrugineus (Cone snail).